The sequence spans 1073 residues: Probable inorganic carbon transporter subunit DabA 2 (1073 aa).

Polar residues predominate over residues 1-20 (MSSGNTSSQNHSPVNNQPTR). The interval 1 to 35 (MSSGNTSSQNHSPVNNQPTRLKSPLPALHKDTQPN) is disordered. Residues Cys535, Asp537, His721, and Cys736 each coordinate Zn(2+).

Belongs to the inorganic carbon transporter (TC 9.A.2) DabA family. In terms of assembly, forms a complex with DabB. It depends on Zn(2+) as a cofactor.

The protein resides in the cell inner membrane. Part of an energy-coupled inorganic carbon pump. This Rhodopirellula baltica (strain DSM 10527 / NCIMB 13988 / SH1) protein is Probable inorganic carbon transporter subunit DabA 2.